The primary structure comprises 384 residues: Proteinase K (384 aa).

The first 15 residues, 1 to 15 (MRLSVLLSLLPLALG), serve as a signal peptide directing secretion. A propeptide spanning residues 16-105 (APAVEQRSEA…IEQDAVVTIN (90 aa)) is cleaved from the precursor. The Inhibitor I9 domain maps to 39 to 104 (KYIVKFKEGS…YIEQDAVVTI (66 aa)). One can recognise a Peptidase S8 domain in the interval 112-384 (PWGLARISST…NLLAYNNYQA (273 aa)). T121 is a Ca(2+) binding site. Residues C139 and C228 are joined by a disulfide bond. Active-site charge relay system residues include D144 and H174. P280, V282, and D305 together coordinate Ca(2+). A disulfide bond links C283 and C354. S329 (charge relay system) is an active-site residue. D365 lines the Ca(2+) pocket.

The protein belongs to the peptidase S8 family. Ca(2+) is required as a cofactor.

The catalysed reaction is Hydrolysis of keratin, and of other proteins with subtilisin-like specificity. Hydrolyzes peptide amides.. Functionally, hydrolyzes keratin at aromatic and hydrophobic residues. The protein is Proteinase K (PROK) of Parengyodontium album (Tritirachium album).